The sequence spans 176 residues: Ferritin, middle subunit (176 aa).

The 150-residue stretch at 7 to 156 (QNYHRDCEAA…DFITNLSRMD (150 aa)) folds into the Ferritin-like diiron domain. 5 residues coordinate Fe cation: Glu24, Glu59, His62, Glu104, and Gln138.

Belongs to the ferritin family. In terms of assembly, in liver, forms a heteromer consisting of middle and heavy subunits. In spleen, forms a homomer. The functional molecule forms a roughly spherical shell with a diameter of 12 nm and contains a central cavity into which the insoluble mineral iron core is deposited. As to expression, liver and spleen (at protein level).

The enzyme catalyses 4 Fe(2+) + O2 + 4 H(+) = 4 Fe(3+) + 2 H2O. Its function is as follows. Stores iron in a soluble, non-toxic, readily available form. Important for iron homeostasis. Has ferroxidase activity. Iron is taken up in the ferrous form and deposited as ferric hydroxides after oxidation. The polypeptide is Ferritin, middle subunit (Trematomus newnesi (Dusky notothen)).